We begin with the raw amino-acid sequence, 242 residues long: Outer membrane protein class 4 (242 aa).

The N-terminal stretch at 1–22 (MTKQLKLSALFVALLASGTAVA) is a signal peptide. 7 tandem repeats follow at residues 69 to 70 (AP), 71 to 72 (EP), 73 to 74 (EP), 75 to 76 (EP), 77 to 78 (EP), 79 to 80 (AP), and 81 to 82 (AP). Residues 69-82 (APEPEPEPEPAPAP) form a 7 X 2 AA tandem repeats of X-P region. Residues 92-229 (YVDETISLSA…RVDVKIRSIV (138 aa)) form the OmpA-like domain. C191 and C214 are disulfide-bonded.

This sequence belongs to the outer membrane OOP (TC 1.B.6) superfamily. The C-terminus exists in a monomer-dimer equilibrium.

Its subcellular location is the cell outer membrane. The sequence is that of Outer membrane protein class 4 from Neisseria meningitidis serogroup B (strain ATCC BAA-335 / MC58).